A 93-amino-acid polypeptide reads, in one-letter code: uncharacterized protein (93 aa).

This is an uncharacterized protein from Treponema pallidum (strain Nichols).